The chain runs to 490 residues: C-type lectin domain family 14 member A (490 aa).

The signal sequence occupies residues 1–21; the sequence is MRPAFALCLLWQALWPGPGGG. Residues 22 to 397 lie on the Extracellular side of the membrane; the sequence is EHPTADRAGC…TPQAFDSSSA (376 aa). Residues 33–173 enclose the C-type lectin domain; the sequence is ASGACYSLHH…LRANGYLCKY (141 aa). The cysteines at positions 143 and 162 are disulfide-linked. The N-linked (GlcNAc...) asparagine glycan is linked to asparagine 189. The EGF-like domain maps to 245–287; it reads PCPGRYLRAGKCAELPNCLDDLGGFACECATGFELGKDGRSCV. The interval 286–349 is disordered; the sequence is CVTSGEGQPT…VTSIPEIPRW (64 aa). Positions 301–315 are enriched in low complexity; it reads VPTRRPPATATSPVP. N-linked (GlcNAc...) asparagine glycosylation is present at asparagine 381. The chain crosses the membrane as a helical span at residues 398 to 418; sequence VVFIFVSTAVVVLVILTMTVL. Topologically, residues 419 to 490 are cytoplasmic; that stretch reads GLVKLCFHES…AESPLGSSDA (72 aa). Residues 428-461 form a disordered region; sequence SPSSQPRKESMGPPGLESDPEPAALGSSSAHCTN.

Its subcellular location is the membrane. This is C-type lectin domain family 14 member A (CLEC14A) from Homo sapiens (Human).